Consider the following 320-residue polypeptide: 4-hydroxy-3-methylbut-2-enyl diphosphate reductase 2 (320 aa).

Cys18 lines the [4Fe-4S] cluster pocket. Residues His47 and His81 each coordinate (2E)-4-hydroxy-3-methylbut-2-enyl diphosphate. 2 residues coordinate dimethylallyl diphosphate: His47 and His81. Isopentenyl diphosphate-binding residues include His47 and His81. A [4Fe-4S] cluster-binding site is contributed by Cys103. (2E)-4-hydroxy-3-methylbut-2-enyl diphosphate is bound at residue His131. Dimethylallyl diphosphate is bound at residue His131. Isopentenyl diphosphate is bound at residue His131. The active-site Proton donor is the Glu133. Thr172 is a (2E)-4-hydroxy-3-methylbut-2-enyl diphosphate binding site. Cys202 is a [4Fe-4S] cluster binding site. Residues Ser230, Ser231, Asn232, and Ser275 each coordinate (2E)-4-hydroxy-3-methylbut-2-enyl diphosphate. The dimethylallyl diphosphate site is built by Ser230, Ser231, Asn232, and Ser275. 4 residues coordinate isopentenyl diphosphate: Ser230, Ser231, Asn232, and Ser275.

It belongs to the IspH family. The cofactor is [4Fe-4S] cluster.

It catalyses the reaction isopentenyl diphosphate + 2 oxidized [2Fe-2S]-[ferredoxin] + H2O = (2E)-4-hydroxy-3-methylbut-2-enyl diphosphate + 2 reduced [2Fe-2S]-[ferredoxin] + 2 H(+). The catalysed reaction is dimethylallyl diphosphate + 2 oxidized [2Fe-2S]-[ferredoxin] + H2O = (2E)-4-hydroxy-3-methylbut-2-enyl diphosphate + 2 reduced [2Fe-2S]-[ferredoxin] + 2 H(+). The protein operates within isoprenoid biosynthesis; dimethylallyl diphosphate biosynthesis; dimethylallyl diphosphate from (2E)-4-hydroxy-3-methylbutenyl diphosphate: step 1/1. It functions in the pathway isoprenoid biosynthesis; isopentenyl diphosphate biosynthesis via DXP pathway; isopentenyl diphosphate from 1-deoxy-D-xylulose 5-phosphate: step 6/6. Its function is as follows. Catalyzes the conversion of 1-hydroxy-2-methyl-2-(E)-butenyl 4-diphosphate (HMBPP) into a mixture of isopentenyl diphosphate (IPP) and dimethylallyl diphosphate (DMAPP). Acts in the terminal step of the DOXP/MEP pathway for isoprenoid precursor biosynthesis. This is 4-hydroxy-3-methylbut-2-enyl diphosphate reductase 2 from Rhodopseudomonas palustris (strain ATCC BAA-98 / CGA009).